We begin with the raw amino-acid sequence, 334 residues long: Trans-3-hydroxy-L-proline dehydratase (334 aa).

The Proton acceptor role is filled by Cys-91. Residues 92–93 (GH), Asp-250, and 255–256 (GT) contribute to the substrate site.

It belongs to the proline racemase family.

It carries out the reaction trans-3-hydroxy-L-proline = 1-pyrroline-2-carboxylate + H2O. Its function is as follows. Catalyzes the dehydration of trans-3-hydroxy-L-proline (t3LHyp) to Delta(1)-pyrroline-2-carboxylate (Pyr2C). Is likely involved in a degradation pathway that converts t3LHyp to L-proline, which allows B.cereus to grow on t3LHyp as a sole carbon source. Displays no proline racemase activity. This chain is Trans-3-hydroxy-L-proline dehydratase, found in Bacillus cereus (strain ATCC 14579 / DSM 31 / CCUG 7414 / JCM 2152 / NBRC 15305 / NCIMB 9373 / NCTC 2599 / NRRL B-3711).